Consider the following 168-residue polypeptide: MKAHRRHIREKIVQALYTLDVRDTDTATAGDWLITPEISKDPKAIRFFKQLLGAIVDNREEIDQYISKHTFNWDMSRIAIIDKNILRMAMAEILYFEDIPPKVSINEAIEIAKKFNSTDKSSKFVNGILDAVYNDLNKSGKINKCGRGLIDQSSNLKKNKEKSPSDDQ.

The protein belongs to the NusB family.

Involved in transcription antitermination. Required for transcription of ribosomal RNA (rRNA) genes. Binds specifically to the boxA antiterminator sequence of the ribosomal RNA (rrn) operons. The polypeptide is Transcription antitermination protein NusB (Prosthecochloris aestuarii (strain DSM 271 / SK 413)).